Consider the following 160-residue polypeptide: Nucleotide-binding protein VF_1240 (160 aa).

It belongs to the YajQ family.

Nucleotide-binding protein. In Aliivibrio fischeri (strain ATCC 700601 / ES114) (Vibrio fischeri), this protein is Nucleotide-binding protein VF_1240.